A 118-amino-acid chain; its full sequence is Large ribosomal subunit protein bL20 (118 aa).

This sequence belongs to the bacterial ribosomal protein bL20 family.

Binds directly to 23S ribosomal RNA and is necessary for the in vitro assembly process of the 50S ribosomal subunit. It is not involved in the protein synthesizing functions of that subunit. The chain is Large ribosomal subunit protein bL20 (rplT) from Aquifex aeolicus (strain VF5).